Here is a 541-residue protein sequence, read N- to C-terminus: uncharacterized protein (541 aa).

The segment at residues 1 to 55 is a signal peptide (tat-type signal); that stretch reads MTKTVTRAGGASGPQQFQSGGETMKYEITRRRFLAASSAVLAAPAIVTMVRPARA. Residues 339–362 are disordered; it reads RRSPSGISSPRSNRQPKAEALSAR. Positions 341 to 351 are enriched in low complexity; the sequence is SPSGISSPRSN. The next 4 helical transmembrane spans lie at 379 to 399, 420 to 440, 466 to 486, and 500 to 520; these read AIVW…MVFM, LPVL…AHSG, LVSA…GEIA, and VGYF…LAVA.

This sequence belongs to the bacterial solute-binding protein 7 family. Post-translationally, predicted to be exported by the Tat system. The position of the signal peptide cleavage has not been experimentally proven.

The protein resides in the cell membrane. This is an uncharacterized protein from Sinorhizobium fredii (strain NBRC 101917 / NGR234).